Here is a 238-residue protein sequence, read N- to C-terminus: MTEAAELPPAPEQAREVFGDRFADAVRYAELLAEAGVQRGLIGPREVPRLWERHLLNCAVLSEVVPEGVTVCDVGSGAGLPGIPLALVREDLKITLLEPLLRRTNFLTEVVELLGLDHVTVIRGRAEEVMGKIPPVHVVTARAVAPLDRLATWGIPLLRPYGEMLALKGDTAEEELKSAATALSKLGAVETSVLHVGEGVVDPLSTVVRVEVGESPGGVRFAAKRAKAARTGRTRRRR.

S-adenosyl-L-methionine is bound by residues Gly75, Leu80, 126 to 127 (AE), and Arg142.

The protein belongs to the methyltransferase superfamily. RNA methyltransferase RsmG family.

The protein resides in the cytoplasm. Its function is as follows. Specifically methylates the N7 position of guanine in position 518 of 16S rRNA. The polypeptide is Ribosomal RNA small subunit methyltransferase G (Streptomyces avermitilis (strain ATCC 31267 / DSM 46492 / JCM 5070 / NBRC 14893 / NCIMB 12804 / NRRL 8165 / MA-4680)).